A 331-amino-acid polypeptide reads, in one-letter code: tRNA-dihydrouridine(20/20a) synthase (331 aa).

FMN-binding positions include 18-20 (PML) and Gln70. The active-site Proton donor is Cys100. FMN contacts are provided by residues Lys139, His172, 212–214 (NGG), and 234–235 (GR).

It belongs to the Dus family. DusA subfamily. Requires FMN as cofactor.

The enzyme catalyses 5,6-dihydrouridine(20) in tRNA + NADP(+) = uridine(20) in tRNA + NADPH + H(+). The catalysed reaction is 5,6-dihydrouridine(20) in tRNA + NAD(+) = uridine(20) in tRNA + NADH + H(+). It carries out the reaction 5,6-dihydrouridine(20a) in tRNA + NADP(+) = uridine(20a) in tRNA + NADPH + H(+). It catalyses the reaction 5,6-dihydrouridine(20a) in tRNA + NAD(+) = uridine(20a) in tRNA + NADH + H(+). Its function is as follows. Catalyzes the synthesis of 5,6-dihydrouridine (D), a modified base found in the D-loop of most tRNAs, via the reduction of the C5-C6 double bond in target uridines. Specifically modifies U20 and U20a in tRNAs. This Escherichia coli O6:H1 (strain CFT073 / ATCC 700928 / UPEC) protein is tRNA-dihydrouridine(20/20a) synthase.